Consider the following 540-residue polypeptide: Glucose-6-phosphate isomerase (540 aa).

E350 (proton donor) is an active-site residue. Catalysis depends on residues H381 and K503.

It belongs to the GPI family.

The protein resides in the cytoplasm. It catalyses the reaction alpha-D-glucose 6-phosphate = beta-D-fructose 6-phosphate. The protein operates within carbohydrate biosynthesis; gluconeogenesis. It functions in the pathway carbohydrate degradation; glycolysis; D-glyceraldehyde 3-phosphate and glycerone phosphate from D-glucose: step 2/4. Catalyzes the reversible isomerization of glucose-6-phosphate to fructose-6-phosphate. This is Glucose-6-phosphate isomerase from Burkholderia ambifaria (strain MC40-6).